Here is a 23-residue protein sequence, read N- to C-terminus: Basic phospholipase A2 mangshantoxin (23 aa).

The protein belongs to the phospholipase A2 family. Group II subfamily. It depends on Ca(2+) as a cofactor. In terms of processing, contains 7 disulfide bonds. In terms of tissue distribution, expressed by the venom gland.

It is found in the secreted. It catalyses the reaction a 1,2-diacyl-sn-glycero-3-phosphocholine + H2O = a 1-acyl-sn-glycero-3-phosphocholine + a fatty acid + H(+). Its function is as follows. Snake venom phospholipase A2 (PLA2) that displays presynaptic neurotoxicity. PLA2 catalyzes the calcium-dependent hydrolysis of the 2-acyl groups in 3-sn-phosphoglycerides. This Protobothrops mangshanensis (Mangshan pitviper) protein is Basic phospholipase A2 mangshantoxin.